The following is a 424-amino-acid chain: UDP-N-acetylglucosamine 1-carboxyvinyltransferase (424 aa).

Phosphoenolpyruvate is bound at residue 22–23 (KN). Residue Arg-95 participates in UDP-N-acetyl-alpha-D-glucosamine binding. Cys-119 serves as the catalytic Proton donor. 2-(S-cysteinyl)pyruvic acid O-phosphothioketal is present on Cys-119. UDP-N-acetyl-alpha-D-glucosamine-binding positions include 124-128 (RPVDQ), Asp-311, and Ile-333.

Belongs to the EPSP synthase family. MurA subfamily.

It is found in the cytoplasm. It catalyses the reaction phosphoenolpyruvate + UDP-N-acetyl-alpha-D-glucosamine = UDP-N-acetyl-3-O-(1-carboxyvinyl)-alpha-D-glucosamine + phosphate. Its pathway is cell wall biogenesis; peptidoglycan biosynthesis. Cell wall formation. Adds enolpyruvyl to UDP-N-acetylglucosamine. In Polaromonas sp. (strain JS666 / ATCC BAA-500), this protein is UDP-N-acetylglucosamine 1-carboxyvinyltransferase.